Here is a 348-residue protein sequence, read N- to C-terminus: Protein RecA (348 aa).

ATP is bound at residue 65 to 72; that stretch reads GPESSGKT.

The protein belongs to the RecA family.

It localises to the cytoplasm. Its function is as follows. Can catalyze the hydrolysis of ATP in the presence of single-stranded DNA, the ATP-dependent uptake of single-stranded DNA by duplex DNA, and the ATP-dependent hybridization of homologous single-stranded DNAs. It interacts with LexA causing its activation and leading to its autocatalytic cleavage. This chain is Protein RecA, found in Vibrio natriegens.